A 168-amino-acid polypeptide reads, in one-letter code: Acetone carboxylase gamma subunit (168 aa).

Heterohexamer of two alpha, two beta and two gamma subunits. It depends on Fe cation as a cofactor. Requires Mg(2+) as cofactor. The cofactor is Zn(2+).

The enzyme catalyses acetone + hydrogencarbonate + 2 ATP + 3 H2O = acetoacetate + 2 AMP + 4 phosphate + 4 H(+). Catalyzes the carboxylation of acetone to form acetoacetate. Has a reduced activity on butanone, and no activity on 2-pentatone, 3-pentatone, 2-hexanone, chloroacetone, pyruvate, phosphoenolpyruvate, acetaldehyde, propionaldehyde and propylene oxide. In Xanthobacter autotrophicus (strain ATCC BAA-1158 / Py2), this protein is Acetone carboxylase gamma subunit.